The chain runs to 60 residues: Cytotoxin 10 (60 aa).

4 disulfide bridges follow: Cys-3–Cys-21, Cys-14–Cys-38, Cys-42–Cys-53, and Cys-54–Cys-59.

This sequence belongs to the three-finger toxin family. Short-chain subfamily. Type IA cytotoxin sub-subfamily. Monomer in solution; Homodimer and oligomer in the presence of negatively charged lipids forming a pore with a size ranging between 20 and 30 Angstroms. As to expression, expressed by the venom gland.

Its subcellular location is the secreted. The protein localises to the target cell membrane. In terms of biological role, shows cytolytic activity on many different cells by forming pore in lipid membranes. In vivo, increases heart rate or kills the animal by cardiac arrest. In addition, it binds to heparin with high affinity, interacts with Kv channel-interacting protein 1 (KCNIP1) in a calcium-independent manner, and binds to integrin alpha-V/beta-3 (ITGAV/ITGB3) with moderate affinity. Has hemolytic activity towards human erythrocytes (EC(50)=0.162 uM) and cytolytic activity towards various cell lines. The sequence is that of Cytotoxin 10 from Naja naja (Indian cobra).